A 227-amino-acid polypeptide reads, in one-letter code: Lipoprotein-releasing system ATP-binding protein LolD (227 aa).

In terms of domain architecture, ABC transporter spans Leu-7–Phe-227. An ATP-binding site is contributed by Ala-43–Ser-50.

It belongs to the ABC transporter superfamily. Lipoprotein translocase (TC 3.A.1.125) family. The complex is composed of two ATP-binding proteins (LolD) and two transmembrane proteins (LolC and LolE).

Its subcellular location is the cell inner membrane. Part of the ABC transporter complex LolCDE involved in the translocation of mature outer membrane-directed lipoproteins, from the inner membrane to the periplasmic chaperone, LolA. Responsible for the formation of the LolA-lipoprotein complex in an ATP-dependent manner. In Rhizobium johnstonii (strain DSM 114642 / LMG 32736 / 3841) (Rhizobium leguminosarum bv. viciae), this protein is Lipoprotein-releasing system ATP-binding protein LolD.